A 327-amino-acid polypeptide reads, in one-letter code: Spermidine/putrescine import ATP-binding protein PotA (327 aa).

Positions 5–235 (IKVEAVEKHF…PKTLFVATFI (231 aa)) constitute an ABC transporter domain. Position 37–44 (37–44 (GPSGCGKT)) interacts with ATP.

This sequence belongs to the ABC transporter superfamily. Spermidine/putrescine importer (TC 3.A.1.11.1) family. In terms of assembly, the complex is composed of two ATP-binding proteins (PotA), two transmembrane proteins (PotB and PotC) and a solute-binding protein (PotD).

It localises to the cell membrane. The enzyme catalyses ATP + H2O + polyamine-[polyamine-binding protein]Side 1 = ADP + phosphate + polyamineSide 2 + [polyamine-binding protein]Side 1.. Part of the ABC transporter complex PotABCD involved in spermidine/putrescine import. Responsible for energy coupling to the transport system. The protein is Spermidine/putrescine import ATP-binding protein PotA of Bacillus anthracis.